Consider the following 278-residue polypeptide: MPELPEVEVTRLGIAPHLEGRKVSAVKIIDGRLRWPVPANLTKTLPGQTVNGIERRGKYLLLEMDTGYLLIHLGMTGTLRVLPSSDPLKTHDRVTLEFGKLSLRLHDPRKFGAVLWHPKSKGPIKKFILLQKLGVEPFSSEFSGELGAEILYQTSRKRSVAVKQFLLAGQAVVGVGNIYCSESLFEAGIHPAKAAGKLTRPQCSRLAKAVRSILKKAIEAGGSSLKDFVNSDGDPGHFMVQTKVYDRKGLPCKVCKTPISQMVQGQRTTYFCSQCQKR.

Residue Pro2 is the Schiff-base intermediate with DNA of the active site. Glu3 functions as the Proton donor in the catalytic mechanism. The active-site Proton donor; for beta-elimination activity is Lys58. His91, Arg109, and Arg158 together coordinate DNA. The FPG-type zinc finger occupies 243–277 (KVYDRKGLPCKVCKTPISQMVQGQRTTYFCSQCQK). Arg267 acts as the Proton donor; for delta-elimination activity in catalysis.

This sequence belongs to the FPG family. As to quaternary structure, monomer. Zn(2+) serves as cofactor.

The catalysed reaction is Hydrolysis of DNA containing ring-opened 7-methylguanine residues, releasing 2,6-diamino-4-hydroxy-5-(N-methyl)formamidopyrimidine.. It catalyses the reaction 2'-deoxyribonucleotide-(2'-deoxyribose 5'-phosphate)-2'-deoxyribonucleotide-DNA = a 3'-end 2'-deoxyribonucleotide-(2,3-dehydro-2,3-deoxyribose 5'-phosphate)-DNA + a 5'-end 5'-phospho-2'-deoxyribonucleoside-DNA + H(+). Its function is as follows. Involved in base excision repair of DNA damaged by oxidation or by mutagenic agents. Acts as a DNA glycosylase that recognizes and removes damaged bases. Has a preference for oxidized purines, such as 7,8-dihydro-8-oxoguanine (8-oxoG). Has AP (apurinic/apyrimidinic) lyase activity and introduces nicks in the DNA strand. Cleaves the DNA backbone by beta-delta elimination to generate a single-strand break at the site of the removed base with both 3'- and 5'-phosphates. This Polynucleobacter necessarius subsp. necessarius (strain STIR1) protein is Formamidopyrimidine-DNA glycosylase.